A 59-amino-acid chain; its full sequence is MAEIRVGKNETLDSALRRFKRSCQKAGVLAEARKHEYYEKPSVKRKKKSEAARKRKSFR.

Residues 40-59 (KPSVKRKKKSEAARKRKSFR) are disordered. Residues 43–59 (VKRKKKSEAARKRKSFR) are compositionally biased toward basic residues.

It belongs to the bacterial ribosomal protein bS21 family.

The protein is Small ribosomal subunit protein bS21 of Desulforamulus reducens (strain ATCC BAA-1160 / DSM 100696 / MI-1) (Desulfotomaculum reducens).